A 307-amino-acid polypeptide reads, in one-letter code: UDP-N-acetylenolpyruvoylglucosamine reductase (307 aa).

Residues 33-198 (KVGGPADIFV…LNATFALQKG (166 aa)) form the FAD-binding PCMH-type domain. Arg177 is an active-site residue. The active-site Proton donor is Ser227. Glu297 is an active-site residue.

This sequence belongs to the MurB family. FAD is required as a cofactor.

It localises to the cytoplasm. It catalyses the reaction UDP-N-acetyl-alpha-D-muramate + NADP(+) = UDP-N-acetyl-3-O-(1-carboxyvinyl)-alpha-D-glucosamine + NADPH + H(+). The protein operates within cell wall biogenesis; peptidoglycan biosynthesis. Cell wall formation. The polypeptide is UDP-N-acetylenolpyruvoylglucosamine reductase (Clostridium novyi (strain NT)).